A 691-amino-acid polypeptide reads, in one-letter code: Elongation factor G (691 aa).

Residues 8–283 (EKQRNIGIMA…AVVQYLPSPL (276 aa)) form the tr-type G domain. GTP-binding positions include 17–24 (AHIDAGKT), 81–85 (DTPGH), and 135–138 (NKMD).

This sequence belongs to the TRAFAC class translation factor GTPase superfamily. Classic translation factor GTPase family. EF-G/EF-2 subfamily.

Its subcellular location is the cytoplasm. Catalyzes the GTP-dependent ribosomal translocation step during translation elongation. During this step, the ribosome changes from the pre-translocational (PRE) to the post-translocational (POST) state as the newly formed A-site-bound peptidyl-tRNA and P-site-bound deacylated tRNA move to the P and E sites, respectively. Catalyzes the coordinated movement of the two tRNA molecules, the mRNA and conformational changes in the ribosome. The chain is Elongation factor G from Lawsonia intracellularis (strain PHE/MN1-00).